The following is a 269-amino-acid chain: Adenosylcobinamide-GDP ribazoletransferase (269 aa).

A run of 6 helical transmembrane segments spans residues S63–L83, L87–L107, V137–G157, A158–M178, L202–V222, and V246–F266.

The protein belongs to the CobS family. It depends on Mg(2+) as a cofactor.

The protein localises to the cell membrane. The enzyme catalyses alpha-ribazole + adenosylcob(III)inamide-GDP = adenosylcob(III)alamin + GMP + H(+). It catalyses the reaction alpha-ribazole 5'-phosphate + adenosylcob(III)inamide-GDP = adenosylcob(III)alamin 5'-phosphate + GMP + H(+). The protein operates within cofactor biosynthesis; adenosylcobalamin biosynthesis; adenosylcobalamin from cob(II)yrinate a,c-diamide: step 7/7. Joins adenosylcobinamide-GDP and alpha-ribazole to generate adenosylcobalamin (Ado-cobalamin). Also synthesizes adenosylcobalamin 5'-phosphate from adenosylcobinamide-GDP and alpha-ribazole 5'-phosphate. This chain is Adenosylcobinamide-GDP ribazoletransferase, found in Deinococcus radiodurans (strain ATCC 13939 / DSM 20539 / JCM 16871 / CCUG 27074 / LMG 4051 / NBRC 15346 / NCIMB 9279 / VKM B-1422 / R1).